A 122-amino-acid polypeptide reads, in one-letter code: MIQMQTNLEVADNSGARRVMCIKVLGGAGRRYASVGDVIVVSVKEAIPRGRVKKGDVLRAVVVRVNQNLKRKDGSVIRFDKNAAVIVNKQSEPVGTRIFGPVPRELRAKNHMKIISLAPEVL.

The protein belongs to the universal ribosomal protein uL14 family. In terms of assembly, part of the 50S ribosomal subunit. Forms a cluster with proteins L3 and L19. In the 70S ribosome, L14 and L19 interact and together make contacts with the 16S rRNA in bridges B5 and B8.

Its function is as follows. Binds to 23S rRNA. Forms part of two intersubunit bridges in the 70S ribosome. This chain is Large ribosomal subunit protein uL14, found in Caulobacter vibrioides (strain ATCC 19089 / CIP 103742 / CB 15) (Caulobacter crescentus).